Consider the following 189-residue polypeptide: Protein GrpE (189 aa).

A compositionally biased stretch (basic residues) spans 1 to 12 (MDKKKHGSHAGA). Positions 1–36 (MDKKKHGSHAGAHHTDEPAAETVAPAAEGAPAAADR) are disordered. Over residues 20-34 (AETVAPAAEGAPAAA) the composition is skewed to low complexity.

Belongs to the GrpE family. As to quaternary structure, homodimer.

It localises to the cytoplasm. Participates actively in the response to hyperosmotic and heat shock by preventing the aggregation of stress-denatured proteins, in association with DnaK and GrpE. It is the nucleotide exchange factor for DnaK and may function as a thermosensor. Unfolded proteins bind initially to DnaJ; upon interaction with the DnaJ-bound protein, DnaK hydrolyzes its bound ATP, resulting in the formation of a stable complex. GrpE releases ADP from DnaK; ATP binding to DnaK triggers the release of the substrate protein, thus completing the reaction cycle. Several rounds of ATP-dependent interactions between DnaJ, DnaK and GrpE are required for fully efficient folding. This is Protein GrpE from Geobacter metallireducens (strain ATCC 53774 / DSM 7210 / GS-15).